Reading from the N-terminus, the 468-residue chain is MTKTLPKDFIFGGATAAYQAEGATHTDGKGPVAWDKYLEDNYWYTAEPASDFYNRYPVDLKLSEEFGVNGIRISIAWSRIFPTGKGEVNPKGVEYYHNLFAECHKRHVEPFVTLHHFDTPEALHSDGDFLNRENIEHFVNYAEFCFKEFSEVNYWTTFNEIGPIGDGQYLVGKFPPGIQYDLAKVFQSHHNMMVSHARAVKLFKDGGYSGEIGVVHALPTKYPFDANNPDDVRAAELEDIIHNKFILDATYLGKYSDKTMEGVNHILEVNGGELDLCEEDFAALDAAKDLNDFLGINYYMSDWMQAFDGETEIIHNGKGEKGSSKYQIKGVGRRKAPVDVPKTDWDWILFPQGLYDQIMRVKADYPNYKKIYITENGLGYKDEFVDNTVYDDGRIDYVKKHLEVISDAISDGVNVKGYFMWSLMDVFSWSNGYEKRYGLFYVDFETQERYPKKSAYWYKKVAETQVIE.

D-galactose 6-phosphate is bound by residues Gln-19, His-116, Asn-159, Glu-160, and Asn-297. Catalysis depends on Glu-160, which acts as the Proton donor. The Nucleophile role is filled by Glu-375. Positions 428, 429, 435, and 437 each coordinate D-galactose 6-phosphate.

The protein belongs to the glycosyl hydrolase 1 family.

It carries out the reaction a 6-phospho-beta-D-galactoside + H2O = D-galactose 6-phosphate + an alcohol. The protein operates within carbohydrate metabolism; lactose degradation; D-galactose 6-phosphate and beta-D-glucose from lactose 6-phosphate: step 1/1. This Streptococcus pyogenes serotype M2 (strain MGAS10270) protein is 6-phospho-beta-galactosidase.